The following is a 294-amino-acid chain: NAD kinase (294 aa).

Asp74 serves as the catalytic Proton acceptor. NAD(+)-binding positions include 74 to 75, 148 to 149, His159, Arg176, Asp178, 189 to 194, and Gln249; these read DG, NE, and TAYSLS.

It belongs to the NAD kinase family. A divalent metal cation is required as a cofactor.

It is found in the cytoplasm. It carries out the reaction NAD(+) + ATP = ADP + NADP(+) + H(+). Involved in the regulation of the intracellular balance of NAD and NADP, and is a key enzyme in the biosynthesis of NADP. Catalyzes specifically the phosphorylation on 2'-hydroxyl of the adenosine moiety of NAD to yield NADP. The protein is NAD kinase of Vibrio atlanticus (strain LGP32) (Vibrio splendidus (strain Mel32)).